The chain runs to 245 residues: MIIPALDLIDGTVVRLHQGDYARQRDYGNDPLPRLQDYAAQGAGVLHLVDLTGAKDPAKRQIPLIKTLVAGVNVPVQVGGGVRTEEDVAALLKAGVARVVIGSTAVKSPDVVKGWFERFGAQALVLALDVRIDEHGNKQVAVSGWQENSGVSLEQLVETYLPVGLKHVLCTDISRDGTLAGSNVSLYEEICARYPQIAFQSSGGIGDIGDIAALRGTGVRGVIVGRALLEGKFTVKEAIQCWQNV.

The active-site Proton acceptor is Asp-7. The active-site Proton donor is the Asp-129.

The protein belongs to the HisA/HisF family.

It is found in the cytoplasm. It carries out the reaction 1-(5-phospho-beta-D-ribosyl)-5-[(5-phospho-beta-D-ribosylamino)methylideneamino]imidazole-4-carboxamide = 5-[(5-phospho-1-deoxy-D-ribulos-1-ylimino)methylamino]-1-(5-phospho-beta-D-ribosyl)imidazole-4-carboxamide. The protein operates within amino-acid biosynthesis; L-histidine biosynthesis; L-histidine from 5-phospho-alpha-D-ribose 1-diphosphate: step 4/9. This is 1-(5-phosphoribosyl)-5-[(5-phosphoribosylamino)methylideneamino] imidazole-4-carboxamide isomerase from Salmonella agona (strain SL483).